The following is a 37-amino-acid chain: Rugosin-C (37 aa).

An intrachain disulfide couples Cys31 to Cys37.

Belongs to the frog skin active peptide (FSAP) family. Brevinin subfamily. As to expression, expressed by the skin glands.

It localises to the secreted. Has antibacterial activity against Gram-positive bacteria. The protein is Rugosin-C of Glandirana rugosa (Japanese wrinkled frog).